The sequence spans 382 residues: Carbamoyl phosphate synthase small chain (382 aa).

The interval 1–187 is CPSase; that stretch reads MPTPALLVLA…EFRPQTATEE (187 aa). L-glutamine-binding residues include S47, G239, and G241. The 187-residue stretch at 191-377 folds into the Glutamine amidotransferase type-1 domain; it reads TVVAIDFGVK…VAQMRAYRQQ (187 aa). Residue C267 is the Nucleophile of the active site. Positions 268, 271, 307, 309, and 310 each coordinate L-glutamine. Catalysis depends on residues H350 and E352.

This sequence belongs to the CarA family. As to quaternary structure, composed of two chains; the small (or glutamine) chain promotes the hydrolysis of glutamine to ammonia, which is used by the large (or ammonia) chain to synthesize carbamoyl phosphate. Tetramer of heterodimers (alpha,beta)4.

It carries out the reaction hydrogencarbonate + L-glutamine + 2 ATP + H2O = carbamoyl phosphate + L-glutamate + 2 ADP + phosphate + 2 H(+). The enzyme catalyses L-glutamine + H2O = L-glutamate + NH4(+). It participates in amino-acid biosynthesis; L-arginine biosynthesis; carbamoyl phosphate from bicarbonate: step 1/1. The protein operates within pyrimidine metabolism; UMP biosynthesis via de novo pathway; (S)-dihydroorotate from bicarbonate: step 1/3. Functionally, small subunit of the glutamine-dependent carbamoyl phosphate synthetase (CPSase). CPSase catalyzes the formation of carbamoyl phosphate from the ammonia moiety of glutamine, carbonate, and phosphate donated by ATP, constituting the first step of 2 biosynthetic pathways, one leading to arginine and/or urea and the other to pyrimidine nucleotides. The small subunit (glutamine amidotransferase) binds and cleaves glutamine to supply the large subunit with the substrate ammonia. The polypeptide is Carbamoyl phosphate synthase small chain (Thermosynechococcus vestitus (strain NIES-2133 / IAM M-273 / BP-1)).